A 170-amino-acid polypeptide reads, in one-letter code: MNFTLLATEGFGLNFNLFETNILNWAVVIFGLYKFLPSFLGKMLQKRREGILLELKDAEDRLLNATQALEKAKKDLSSAEEKASQIKADSLKRSESIRMESEKKAIEEMARIKQSAISDESSEASRAISQLRKEAIELAIKKALDSLPNRLDQTKQENLVTQSINNIEEN.

The chain crosses the membrane as a helical span at residues 15-37; the sequence is FNLFETNILNWAVVIFGLYKFLP. Positions 72-98 are disordered; sequence AKKDLSSAEEKASQIKADSLKRSESIR.

The protein belongs to the ATPase B chain family. As to quaternary structure, F-type ATPases have 2 components, F(1) - the catalytic core - and F(0) - the membrane proton channel. F(1) has five subunits: alpha(3), beta(3), gamma(1), delta(1), epsilon(1). F(0) has four main subunits: a(1), b(1), b'(1) and c(10-14). The alpha and beta chains form an alternating ring which encloses part of the gamma chain. F(1) is attached to F(0) by a central stalk formed by the gamma and epsilon chains, while a peripheral stalk is formed by the delta, b and b' chains.

It localises to the cellular thylakoid membrane. In terms of biological role, f(1)F(0) ATP synthase produces ATP from ADP in the presence of a proton or sodium gradient. F-type ATPases consist of two structural domains, F(1) containing the extramembraneous catalytic core and F(0) containing the membrane proton channel, linked together by a central stalk and a peripheral stalk. During catalysis, ATP synthesis in the catalytic domain of F(1) is coupled via a rotary mechanism of the central stalk subunits to proton translocation. Its function is as follows. Component of the F(0) channel, it forms part of the peripheral stalk, linking F(1) to F(0). This is ATP synthase subunit b from Prochlorococcus marinus (strain MIT 9215).